A 153-amino-acid chain; its full sequence is Prostaglandin E synthase (153 aa).

Residues Met1–Ala13 lie on the Lumenal side of the membrane. A helical transmembrane segment spans residues Leu14–Lys42. Arg39 provides a ligand contact to glutathione. Residues Lys43–Arg61 lie on the Cytoplasmic side of the membrane. Residues Asp62–Ser91 traverse the membrane as a helical segment. Glutathione is bound at residue Arg74–Glu78. The Lumenal segment spans residues Phe92–Asp96. Residues Pro97–Gly120 form a helical membrane-spanning segment. 2 residues coordinate glutathione: His114 and Tyr118. Over Lys121–Ala124 the chain is Cytoplasmic. The helical transmembrane segment at Pro125–Leu153 threads the bilayer. Arg127–Tyr131 serves as a coordination point for glutathione.

It belongs to the MAPEG family. In terms of assembly, homotrimer. Requires glutathione as cofactor.

It localises to the membrane. The protein resides in the cytoplasm. It is found in the perinuclear region. The catalysed reaction is prostaglandin H2 = prostaglandin E2. The enzyme catalyses 2-glyceryl-prostaglandin H2 = 2-glyceryl-prostaglandin E2. It catalyses the reaction prostaglandin G2 = (15S)-15-hydroperoxy-prostaglandin E2. It carries out the reaction 1-chloro-2,4-dinitrobenzene + glutathione = 2,4-dinitrophenyl-S-glutathione + chloride + H(+). The catalysed reaction is (5S)-hydroperoxy-(6E,8Z,11Z,14Z)-eicosatetraenoate + 2 glutathione = (5S)-hydroxy-(6E,8Z,11Z,14Z)-eicosatetraenoate + glutathione disulfide + H2O. It functions in the pathway lipid metabolism; prostaglandin biosynthesis. Functionally, terminal enzyme of the cyclooxygenase (COX)-2-mediated prostaglandin E2 (PGE2) biosynthetic pathway. Catalyzes the glutathione-dependent oxidoreduction of prostaglandin endoperoxide H2 (PGH2) to prostaglandin E2 (PGE2) in response to inflammatory stimuli. Plays a key role in inflammation response, fever and pain. Also catalyzes the oxidoreduction of endocannabinoids into prostaglandin glycerol esters and PGG2 into 15-hydroperoxy-PGE2. In addition, displays low glutathione transferase and glutathione-dependent peroxidase activities, toward 1-chloro-2,4-dinitrobenzene and 5-hydroperoxyicosatetraenoic acid (5-HPETE), respectively. In Equus caballus (Horse), this protein is Prostaglandin E synthase (PTGES).